We begin with the raw amino-acid sequence, 418 residues long: Arrestin domain-containing protein 4 (418 aa).

2 consecutive short sequence motifs (PPxY motif) follow at residues 350–353 (PPNY) and 395–398 (PPLY).

This sequence belongs to the arrestin family. As to quaternary structure, interacts with ADRB2. Interacts (via PPxY motifs) with ITCH, NEDD4L and WWP2. Interacts with AVPR2. Identified in a complex containing at least ARRDC4, AVPR2 and HGS. Interacts with SLC11A2; controls the incorporation of SLC11A2 into extracellular vesicles through an ubiquitination-dependent mechanism. Interacts with TRIM65.

Its subcellular location is the early endosome. The protein resides in the cell membrane. The protein localises to the cytoplasmic vesicle. Functions as an adapter recruiting ubiquitin-protein ligases to their specific substrates. Plays a role in endocytosis of activated G protein-coupled receptors (GPCRs). Through an ubiquitination-dependent mechanism also plays a role in the incorporation of SLC11A2 into extracellular vesicles. May play a role in glucose uptake. Participates in innate immune response by promoting IFIH1/MDA5 activation through interaction with TRIM65. The polypeptide is Arrestin domain-containing protein 4 (ARRDC4) (Homo sapiens (Human)).